Consider the following 431-residue polypeptide: Sulfide dehydrogenase [flavocytochrome c] flavoprotein chain (431 aa).

Residues 1–30 (MTLNRRDFIKTSGAAVAAVGILGFPHLAFG) constitute a signal peptide (tat-type signal). 70-76 (YTCYLSN) is an FAD binding site. A disulfide bridge links C191 with C367.

As to quaternary structure, dimer of one cytochrome and one flavoprotein. Post-translationally, predicted to be exported by the Tat system. The position of the signal peptide cleavage has been experimentally proven.

Its subcellular location is the periplasm. It catalyses the reaction hydrogen sulfide + 2 Fe(III)-[cytochrome c] = sulfur + 2 Fe(II)-[cytochrome c] + H(+). The polypeptide is Sulfide dehydrogenase [flavocytochrome c] flavoprotein chain (fccB) (Allochromatium vinosum (strain ATCC 17899 / DSM 180 / NBRC 103801 / NCIMB 10441 / D) (Chromatium vinosum)).